Consider the following 375-residue polypeptide: Negative elongation factor E (375 aa).

Positions 7–36 (GLSEEEEALQKKFNKLKKKKKALLALKKQS) form a coiled coil. Residues 30-58 (LALKKQSSSGPASQGGVKRSLSEQPVVDT) form a disordered region. Ser-51 is modified (phosphoserine). Lys-78 participates in a covalent cross-link: Glycyl lysine isopeptide (Lys-Gly) (interchain with G-Cter in SUMO1); alternate. Lys-78 is covalently cross-linked (Glycyl lysine isopeptide (Lys-Gly) (interchain with G-Cter in SUMO2); alternate). The disordered stretch occupies residues 79–262 (AETKNSGFKR…SDSFPERRAP (184 aa)). Residue Lys-82 forms a Glycyl lysine isopeptide (Lys-Gly) (interchain with G-Cter in SUMO2) linkage. The segment covering 90–101 (RTLEGKLKDPEK) has biased composition (basic and acidic residues). Residues Ser-113 and Ser-115 each carry the phosphoserine modification. Glu-122 carries the post-translational modification PolyADP-ribosyl glutamic acid. Ser-131 and Ser-139 each carry phosphoserine. Glu-151 is subject to PolyADP-ribosyl glutamic acid. Residues 155–167 (APGAGDGPPRGFD) show a composition bias toward low complexity. The residue at position 172 (Glu-172) is a PolyADP-ribosyl glutamic acid. A phosphoserine mark is found at Ser-179, Ser-181, Ser-185, and Ser-187. 4 repeat units span residues 184-185 (RS), 186-187 (RS), 188-189 (RD), and 190-191 (RS). A 32 X 2 AA approximate tandem repeats of R-[DSE] region spans residues 184-247 (RSRSRDRSHD…RDRDRERDRE (64 aa)). Residues 186-260 (RSRDRSHDRS…RRSDSFPERR (75 aa)) show a composition bias toward basic and acidic residues. Ser-191 is modified (phosphoserine). One copy of the 5; approximate repeat lies at 192 to 193 (HD). 4 repeat units span residues 194–195 (RS), 196–197 (RD), 198–199 (RD), and 200–201 (RD). One copy of the 10; approximate repeat lies at 202-203 (KE). 7 consecutive repeat copies span residues 204–205 (RD), 206–207 (RD), 208–209 (RD), 210–211 (RD), 212–213 (RD), 214–215 (RD), and 216–217 (RD). An 18; approximate repeat occupies 218–219 (KD). One copy of the 19; approximate repeat lies at 220 to 221 (KD). A run of 4 repeats spans residues 222–223 (RD), 224–225 (RD), 226–227 (RD), and 228–229 (RD). The stretch at 230–231 (KE) is one 24; approximate repeat. Tandem repeats lie at residues 232 to 233 (RD), 234 to 235 (RD), 236 to 237 (RD), 238 to 239 (RD), 240 to 241 (RD), 242 to 243 (RE), 244 to 245 (RD), and 246 to 247 (RE). Phosphoserine is present on residues Ser-253 and Ser-255. In terms of domain architecture, RRM spans 266-336 (NTLYVYGEDM…VQLKVNIARK (71 aa)). Phosphothreonine occurs at positions 276 and 278. 2 positions are modified to phosphoserine: Ser-285 and Ser-357.

It belongs to the RRM NELF-E family. The NELF complex is composed of NELFA, NELFB, NELFCD and NELFE. Interacts with NELFB. Phosphorylated by the P-TEFb complex at sites next to its RNA recognition motif, promoting its release from chromatin. Post-translationally, sumoylated. In terms of processing, poly-ADP-ribosylated by PARP1, thereby preventing RNA-binding and relieving transcription pausing.

The protein localises to the nucleus. It localises to the chromosome. Its function is as follows. Essential component of the NELF complex, a complex that negatively regulates the elongation of transcription by RNA polymerase II. The NELF complex, which acts via an association with the DSIF complex and causes transcriptional pausing, is counteracted by the P-TEFb kinase complex. Provides the strongest RNA binding activity of the NELF complex and may initially recruit the NELF complex to RNA. The protein is Negative elongation factor E (Nelfe) of Mus musculus (Mouse).